Reading from the N-terminus, the 220-residue chain is Lactate utilization protein C (220 aa).

The protein belongs to the LutC/YkgG family.

Functionally, is involved in L-lactate degradation and allows cells to grow with lactate as the sole carbon source. This Anoxybacillus flavithermus (strain DSM 21510 / WK1) protein is Lactate utilization protein C.